We begin with the raw amino-acid sequence, 389 residues long: Alkanesulfonate monooxygenase (389 aa).

Belongs to the SsuD family.

The enzyme catalyses an alkanesulfonate + FMNH2 + O2 = an aldehyde + FMN + sulfite + H2O + 2 H(+). In terms of biological role, catalyzes the desulfonation of aliphatic sulfonates. The sequence is that of Alkanesulfonate monooxygenase from Variovorax paradoxus (strain S110).